We begin with the raw amino-acid sequence, 1083 residues long: Integrator complex subunit 3 homolog (1083 aa).

Disordered regions lie at residues 551–579 (NEAV…DLPL), 929–953 (YPSS…TPSA), and 1014–1083 (AVGR…NDSD). Positions 942–953 (KGSSAASSTPSA) are enriched in low complexity. A phosphoserine mark is found at Ser1053, Ser1054, Ser1058, and Ser1059. Residues 1066–1077 (HKVTQPAKKRKK) show a composition bias toward basic residues.

Belongs to the Integrator subunit 3 family. Belongs to the multiprotein complex Integrator, at least composed of IntS1, IntS2, IntS3, IntS4, omd/IntS5, IntS6, defl/IntS7, IntS8, IntS9, IntS10, IntS11, IntS12, asun/IntS13, IntS14 and IntS15. The core complex associates with protein phosphatase 2A subunits mts/PP2A and Pp2A-29B, to form the Integrator-PP2A (INTAC) complex.

The protein localises to the nucleus. It localises to the cytoplasm. Its function is as follows. Component of the integrator complex, a multiprotein complex that terminates RNA polymerase II (Pol II) transcription in the promoter-proximal region of genes. The integrator complex provides a quality checkpoint during transcription elongation by driving premature transcription termination of transcripts that are unfavorably configured for transcriptional elongation: the complex terminates transcription by (1) catalyzing dephosphorylation of the C-terminal domain (CTD) of Pol II subunit Polr2A/Rbp1 and Spt5, and (2) degrading the exiting nascent RNA transcript via endonuclease activity. The integrator complex is also involved in the 3'-end processing of the U7 snRNA, and also the spliceosomal snRNAs U1, U2, U4 and U5. This Drosophila grimshawi (Hawaiian fruit fly) protein is Integrator complex subunit 3 homolog (IntS3).